Here is a 162-residue protein sequence, read N- to C-terminus: Large ribosomal subunit protein uL30 (162 aa).

This sequence belongs to the universal ribosomal protein uL30 family. As to quaternary structure, part of the 50S ribosomal subunit.

The sequence is that of Large ribosomal subunit protein uL30 from Desulfurococcus amylolyticus (strain DSM 18924 / JCM 16383 / VKM B-2413 / 1221n) (Desulfurococcus kamchatkensis).